The chain runs to 323 residues: tRNA U34 carboxymethyltransferase (323 aa).

Carboxy-S-adenosyl-L-methionine-binding positions include Lys91, Trp105, Lys110, Gly130, 152-154 (DPT), 181-182 (IE), Met196, Tyr200, and Arg315.

It belongs to the class I-like SAM-binding methyltransferase superfamily. CmoB family. Homotetramer.

It catalyses the reaction carboxy-S-adenosyl-L-methionine + 5-hydroxyuridine(34) in tRNA = 5-carboxymethoxyuridine(34) in tRNA + S-adenosyl-L-homocysteine + H(+). Functionally, catalyzes carboxymethyl transfer from carboxy-S-adenosyl-L-methionine (Cx-SAM) to 5-hydroxyuridine (ho5U) to form 5-carboxymethoxyuridine (cmo5U) at position 34 in tRNAs. This Shigella boydii serotype 18 (strain CDC 3083-94 / BS512) protein is tRNA U34 carboxymethyltransferase.